Reading from the N-terminus, the 264-residue chain is Small ribosomal subunit protein uS2 (264 aa).

It belongs to the universal ribosomal protein uS2 family.

The polypeptide is Small ribosomal subunit protein uS2 (Helicobacter pylori (strain P12)).